The sequence spans 68 residues: DNA-directed RNA polymerase subunit omega (68 aa).

It belongs to the RNA polymerase subunit omega family. The RNAP catalytic core consists of 2 alpha, 1 beta, 1 beta' and 1 omega subunit. When a sigma factor is associated with the core the holoenzyme is formed, which can initiate transcription.

It carries out the reaction RNA(n) + a ribonucleoside 5'-triphosphate = RNA(n+1) + diphosphate. In terms of biological role, promotes RNA polymerase assembly. Latches the N- and C-terminal regions of the beta' subunit thereby facilitating its interaction with the beta and alpha subunits. This Desulfitobacterium hafniense (strain DSM 10664 / DCB-2) protein is DNA-directed RNA polymerase subunit omega.